Here is a 102-residue protein sequence, read N- to C-terminus: NADH-quinone oxidoreductase subunit K (102 aa).

3 helical membrane-spanning segments follow: residues 6-26 (LIAMMILAAGLFAIGLFGVLA), 30-50 (IMFQLVALEVALSGPALGFVA), and 63-83 (MFILVLTLAAAEVAVGLALFL).

Belongs to the complex I subunit 4L family. As to quaternary structure, NDH-1 is composed of 14 different subunits. Subunits NuoA, H, J, K, L, M, N constitute the membrane sector of the complex.

The protein resides in the cell inner membrane. It carries out the reaction a quinone + NADH + 5 H(+)(in) = a quinol + NAD(+) + 4 H(+)(out). NDH-1 shuttles electrons from NADH, via FMN and iron-sulfur (Fe-S) centers, to quinones in the respiratory chain. The immediate electron acceptor for the enzyme in this species is believed to be ubiquinone. Couples the redox reaction to proton translocation (for every two electrons transferred, four hydrogen ions are translocated across the cytoplasmic membrane), and thus conserves the redox energy in a proton gradient. The polypeptide is NADH-quinone oxidoreductase subunit K (Rhodopseudomonas palustris (strain BisB5)).